The following is a 194-amino-acid chain: Cytochrome c oxidase assembly protein CtaG (194 aa).

Topologically, residues 1–12 are cytoplasmic; it reads MALRGPAKTVAQ. The chain crosses the membrane as a helical; Signal-anchor for type II membrane protein span at residues 13–35; the sequence is TVSVVIFMGALAWASVPLYDWFC. Over 36–194 the chain is Periplasmic; sequence RVTGFGGVTG…IEENSDTSLN (159 aa).

Belongs to the COX11/CtaG family.

It localises to the cell inner membrane. Its function is as follows. Exerts its effect at some terminal stage of cytochrome c oxidase synthesis, probably by being involved in the insertion of the copper B into subunit I. This chain is Cytochrome c oxidase assembly protein CtaG, found in Roseobacter denitrificans (strain ATCC 33942 / OCh 114) (Erythrobacter sp. (strain OCh 114)).